The sequence spans 142 residues: Putative pre-16S rRNA nuclease (142 aa).

The protein belongs to the YqgF nuclease family.

It localises to the cytoplasm. Functionally, could be a nuclease involved in processing of the 5'-end of pre-16S rRNA. The polypeptide is Putative pre-16S rRNA nuclease (Desulfitobacterium hafniense (strain DSM 10664 / DCB-2)).